Consider the following 396-residue polypeptide: MNQSENQIDQILKRGVAEVIVEEDFKKLLLSGRKLRLKEGFDPSSPDIHLGHMVALRKLRQLQDLGHQVVLIVGDWTAQIGDPSGASVTRPMLSAEQVKANAKTYLEQFFKIVDKDKTEVRWQSEWYGNFKLEDVVRLSSKFTVAQMLARDDFAKRYAAGKPISVTELLYPMLQAYDSVMVKSDVEFGGTDQKFNLLVGRELQEMVGQKPQQVLMVPILVGTDGVHKMSKSLGNYIGVAEDPSEIFGKCMSIPDELILQYFELVTDIPDQEIADFKAQMENGQVNPMILKKRLASELLTQLYNATAAQEADARFTRVVQRGEIPEDMPECRLENGQNTGVIDFIILSGLAKSKSEARRLLEQGAVEINSEKISDQNTPVKCGDIIKAGKRRYSKAI.

The 'HIGH' region signature appears at 43-52 (PSSPDIHLGH). The 'KMSKS' region signature appears at 227–231 (KMSKS). Lys230 contacts ATP. The region spanning 338–396 (TGVIDFIILSGLAKSKSEARRLLEQGAVEINSEKISDQNTPVKCGDIIKAGKRRYSKAI) is the S4 RNA-binding domain.

It belongs to the class-I aminoacyl-tRNA synthetase family. TyrS type 2 subfamily. As to quaternary structure, homodimer.

Its subcellular location is the cytoplasm. It catalyses the reaction tRNA(Tyr) + L-tyrosine + ATP = L-tyrosyl-tRNA(Tyr) + AMP + diphosphate + H(+). Its function is as follows. Catalyzes the attachment of tyrosine to tRNA(Tyr) in a two-step reaction: tyrosine is first activated by ATP to form Tyr-AMP and then transferred to the acceptor end of tRNA(Tyr). In Dehalococcoides mccartyi (strain CBDB1), this protein is Tyrosine--tRNA ligase.